The sequence spans 389 residues: Type III polyketide synthase 21 (389 aa).

Cys170 acts as the Nucleophile in catalysis.

This sequence belongs to the thiolase-like superfamily. Chalcone/stilbene synthases family. In terms of tissue distribution, expressed in anthers. Expressed in young and adult flowers.

Plant type III polyketide synthases (PKSs) that catalyzes the condensation of fatty acyl-CoA with malonyl-CoA to generate triketide and tetraketide alpha-pyrones, the main components of pollen exine and potential sporopollenin precursors. This Oryza sativa subsp. japonica (Rice) protein is Type III polyketide synthase 21 (PKS21).